A 507-amino-acid chain; its full sequence is ATP synthase subunit alpha (507 aa).

Position 170–177 (170–177 (GDRKTGKT)) interacts with ATP.

Belongs to the ATPase alpha/beta chains family. As to quaternary structure, F-type ATPases have 2 components, CF(1) - the catalytic core - and CF(0) - the membrane proton channel. CF(1) has five subunits: alpha(3), beta(3), gamma(1), delta(1), epsilon(1). CF(0) has three main subunits: a(1), b(2) and c(9-12). The alpha and beta chains form an alternating ring which encloses part of the gamma chain. CF(1) is attached to CF(0) by a central stalk formed by the gamma and epsilon chains, while a peripheral stalk is formed by the delta and b chains.

It localises to the cell inner membrane. The catalysed reaction is ATP + H2O + 4 H(+)(in) = ADP + phosphate + 5 H(+)(out). In terms of biological role, produces ATP from ADP in the presence of a proton gradient across the membrane. The alpha chain is a regulatory subunit. The polypeptide is ATP synthase subunit alpha (Anaplasma marginale (strain Florida)).